Here is a 188-residue protein sequence, read N- to C-terminus: Pyridoxal 5'-phosphate synthase subunit PdxT (188 aa).

47 to 49 (GES) lines the L-glutamine pocket. Catalysis depends on Cys79, which acts as the Nucleophile. L-glutamine is bound by residues Arg105 and 134–135 (IR). Residues His170 and Glu172 each act as charge relay system in the active site.

This sequence belongs to the glutaminase PdxT/SNO family. As to quaternary structure, in the presence of PdxS, forms a dodecamer of heterodimers. Only shows activity in the heterodimer.

It catalyses the reaction aldehydo-D-ribose 5-phosphate + D-glyceraldehyde 3-phosphate + L-glutamine = pyridoxal 5'-phosphate + L-glutamate + phosphate + 3 H2O + H(+). The enzyme catalyses L-glutamine + H2O = L-glutamate + NH4(+). It functions in the pathway cofactor biosynthesis; pyridoxal 5'-phosphate biosynthesis. Its function is as follows. Catalyzes the hydrolysis of glutamine to glutamate and ammonia as part of the biosynthesis of pyridoxal 5'-phosphate. The resulting ammonia molecule is channeled to the active site of PdxS. The protein is Pyridoxal 5'-phosphate synthase subunit PdxT of Listeria welshimeri serovar 6b (strain ATCC 35897 / DSM 20650 / CCUG 15529 / CIP 8149 / NCTC 11857 / SLCC 5334 / V8).